We begin with the raw amino-acid sequence, 335 residues long: Meiotic expression up-regulated protein 14 (335 aa).

It localises to the cytoplasm. The protein resides in the cytoskeleton. It is found in the microtubule organizing center. Its subcellular location is the spindle pole body. The protein localises to the nucleus membrane. It localises to the prospore membrane. Has a role in nuclear division during meiosis II where it stabilizes the proper segregation of the spindle pole bodies. Also has a role in the formation and extension of the forespore membrane. The sequence is that of Meiotic expression up-regulated protein 14 (meu14) from Schizosaccharomyces pombe (strain 972 / ATCC 24843) (Fission yeast).